We begin with the raw amino-acid sequence, 61 residues long: Bacteriocin mesentericin Y105 (61 aa).

Residues 1–24 form the signal peptide; that stretch reads MTNMKSVEAYQQLDNQNLKKVVGG. An intrachain disulfide couples Cys-33 to Cys-38.

Belongs to the bacteriocin class IIA/YGNGV family.

The protein localises to the secreted. Its function is as follows. Bacteriocin active against Listeria monocytogenes. In Leuconostoc mesenteroides, this protein is Bacteriocin mesentericin Y105 (mesY).